The following is a 448-amino-acid chain: Microtubule-associated protein tau (448 aa).

Basic and acidic residues predominate over residues 1–16 (MAEPRQEFDVMEDHAQ). Residues 1–264 (MAEPRQEFDV…GPMPDLKNVK (264 aa)) are disordered. Residue alanine 2 is modified to N-acetylalanine. Tyrosine 19 carries the post-translational modification Phosphotyrosine. Residue lysine 33 forms a Glycyl lysine isopeptide (Lys-Gly) (interchain with G-Cter in ubiquitin) linkage. Phosphoserine is present on residues serine 35 and serine 50. Over residues 50–60 (SETSDAKSTPT) the composition is skewed to polar residues. A phosphothreonine mark is found at threonine 58 and threonine 60. Residues 71-89 (EGAPGEQAAAQAPAEIPEG) show a composition bias toward low complexity. The residue at position 100 (threonine 100) is a Phosphothreonine. The span at 119–135 (KGKDGTGPDDKKTKGAD) shows a compositional bias: basic and acidic residues. Threonine 144 carries the post-translational modification Phosphothreonine. An Omega-N-methylarginine modification is found at arginine 146. At lysine 154 the chain carries N6,N6-dimethyllysine; alternate. N6-acetyllysine; alternate is present on lysine 154. Residues threonine 160, threonine 166, threonine 167, and threonine 172 each carry the phosphothreonine modification. The span at 163–176 (PAKTTPTPKTSPAT) shows a compositional bias: low complexity. Positions 189–200 (KSERGESGKSGD) are enriched in basic and acidic residues. A phosphoserine mark is found at serine 198 and serine 202. Residues 201–221 (RSGYSSPGSPGTPGSRSRTPS) show a composition bias toward low complexity. Tyrosine 204 carries the phosphotyrosine modification. Residues serine 205, serine 206, and serine 209 each carry the phosphoserine modification. A phosphothreonine mark is found at threonine 212 and threonine 219. The residue at position 221 (serine 221) is a Phosphoserine. Threonine 224 bears the Phosphothreonine mark. Position 232 is an N6-acetyllysine (lysine 232). Threonine 238 bears the Phosphothreonine mark. 2 positions are modified to phosphoserine: serine 242 and serine 244. Tau/MAP repeat units follow at residues 251 to 281 (QAAP…GGGK), 282 to 312 (VQII…GGGS), 313 to 343 (VQIV…GGGQ), and 344 to 375 (VEVK…GGGN). A Glycyl lysine isopeptide (Lys-Gly) (interchain with G-Cter in ubiquitin) cross-link involves residue lysine 261. Lysine 266 bears the N6-acetyllysine; alternate mark. Lysine 266 carries the N6-methyllysine; alternate modification. Residue lysine 266 forms a Glycyl lysine isopeptide (Lys-Gly) (interchain with G-Cter in ubiquitin); alternate linkage. Serine 269 bears the Phosphoserine mark. Lysine 274 participates in a covalent cross-link: Glycyl lysine isopeptide (Lys-Gly) (interchain with G-Cter in ubiquitin). Lysine 288 bears the N6-acetyllysine; alternate mark. A Glycyl lysine isopeptide (Lys-Gly) (interchain with G-Cter in ubiquitin); alternate cross-link involves residue lysine 288. Phosphoserine occurs at positions 292 and 296. Lysine 297 carries the N6-acetyllysine modification. Residues cysteine 298 and cysteine 329 are joined by a disulfide bond. Residue serine 300 is modified to Phosphoserine. Lysine 305 carries the N6-acetyllysine; alternate modification. A Glycyl lysine isopeptide (Lys-Gly) (interchain with G-Cter in ubiquitin); alternate cross-link involves residue lysine 305. At serine 312 the chain carries Phosphoserine. N6,N6-dimethyllysine; alternate is present on lysine 318. N6-acetyllysine; alternate is present on residues lysine 318, lysine 324, and lysine 328. Glycyl lysine isopeptide (Lys-Gly) (interchain with G-Cter in ubiquitin); alternate cross-links involve residues lysine 318, lysine 324, and lysine 328. A Phosphoserine modification is found at serine 331. Lysine 338, lysine 350, and lysine 354 each carry N6-acetyllysine; alternate. Residues lysine 338, lysine 350, and lysine 354 each participate in a glycyl lysine isopeptide (Lys-Gly) (interchain with G-Cter in ubiquitin); alternate cross-link. Position 356 is an omega-N-methylarginine (arginine 356). Serine 359 is subject to Phosphoserine. Lysine 360 participates in a covalent cross-link: Glycyl lysine isopeptide (Lys-Gly) (interchain with G-Cter in ubiquitin). Serine 363 is modified (phosphoserine). Position 376 is an N6-acetyllysine; alternate (lysine 376). Lysine 376 participates in a covalent cross-link: Glycyl lysine isopeptide (Lys-Gly) (interchain with G-Cter in ubiquitin); alternate. A Glycyl lysine isopeptide (Lys-Gly) (interchain with G-Cter in ubiquitin) cross-link involves residue lysine 382. An N6-acetyllysine; alternate modification is found at lysine 392. Lysine 392 participates in a covalent cross-link: Glycyl lysine isopeptide (Lys-Gly) (interchain with G-Cter in ubiquitin); alternate. Tyrosine 401 carries the post-translational modification Phosphotyrosine. Phosphoserine occurs at positions 403 and 407. The interval 405–424 (VVSGDTSPRHLSNVSSTGSI) is disordered. Positions 408 to 423 (GDTSPRHLSNVSSTGS) are enriched in polar residues. Residue threonine 410 is modified to Phosphothreonine. Phosphoserine is present on residues serine 411, serine 416, serine 423, and serine 429. A Phosphothreonine modification is found at threonine 434.

As to quaternary structure, interacts with MARK1, MARK2, MARK3 and MARK4. Interacts with SQSTM1 when polyubiquitinated. Interacts with PSMC2 through SQSTM1. Interacts with FKBP4. Binds to CSNK1D. Interacts with SGK1. Interacts with PIN1. Interacts with LRRK2. Interacts with LRP1, leading to endocytosis; this interaction is reduced in the presence of LRPAP1/RAP. Post-translationally, polyubiquitinated. Requires functional TRAF6 and may provoke SQSTM1-dependent degradation by the proteasome. In terms of processing, phosphorylation at various serine and threonine residues in S-P or T-P motifs by proline-directed protein kinases (PDPK1, CDK1, CDK5, GSK3, MAPK) (a few sites per protein in interphase, more in mitosis), and at serine residues in K-X-G-S motifs by MAP/microtubule affinity-regulating kinase (MARK1, MARK2, MARK3, MARK4), causing detachment from microtubules, and their disassembly. Phosphorylation at Ser-269 by BRSK1 and BRSK2 in neurons affects ability to bind microtubules and plays a role in neuron polarization. Phosphorylated by PHK. Dephosphorylation at several serine and threonine residues by the serine/threonine phosphatase PPP5C. O-glycosylated; contains at least 4 GlcNAc. Site-specific or stoichiometric changes in glycosylation may modulate tau function and also play a role in PHF's formation. Expressed in neurons.

It localises to the cytoplasm. The protein localises to the cytosol. The protein resides in the cell membrane. It is found in the cytoskeleton. Its subcellular location is the cell projection. It localises to the axon. The protein localises to the dendrite. The protein resides in the secreted. In terms of biological role, promotes microtubule assembly and stability, and might be involved in the establishment and maintenance of neuronal polarity. The C-terminus binds axonal microtubules while the N-terminus binds neural plasma membrane components, suggesting that tau functions as a linker protein between both. Axonal polarity is predetermined by tau localization (in the neuronal cell) in the domain of the cell body defined by the centrosome. The short isoforms allow plasticity of the cytoskeleton whereas the longer isoforms may preferentially play a role in its stabilization. This chain is Microtubule-associated protein tau (MAPT), found in Bos taurus (Bovine).